Consider the following 617-residue polypeptide: tRNA-dihydrouridine(47) synthase [NAD(P)(+)] (617 aa).

Residues 42 to 70 (KENNALCPAISIGNECPYKENCKFPHDVE) form a C3H1-type zinc finger. The interval 160 to 193 (EEKPDPSSKVSNIPEENRDATSAISEGKETESVS) is disordered. FMN contacts are provided by residues 245–247 (PLT) and Gln308. Residue Cys340 is the Proton donor of the active site. FMN-binding positions include Lys380, His411, 460–462 (NGD), and 483–484 (AR).

This sequence belongs to the Dus family. Dus3 subfamily. The cofactor is FMN.

It localises to the cytoplasm. Its subcellular location is the nucleus. The catalysed reaction is 5,6-dihydrouridine(47) in tRNA + NAD(+) = uridine(47) in tRNA + NADH + H(+). It catalyses the reaction 5,6-dihydrouridine(47) in tRNA + NADP(+) = uridine(47) in tRNA + NADPH + H(+). The enzyme catalyses a 5,6-dihydrouridine in mRNA + NAD(+) = a uridine in mRNA + NADH + H(+). It carries out the reaction a 5,6-dihydrouridine in mRNA + NADP(+) = a uridine in mRNA + NADPH + H(+). Catalyzes the synthesis of dihydrouridine, a modified base, in various RNAs, such as tRNAs and mRNAs. Modifies the uridine in position 47 (U47) in the D-loop of tRNAs. Also able to mediate formation of dihydrouridine outside of the D-loop of tRNAs. Catalyzes the synthesis of dihydrouridine in some mRNAs, thereby affecting their translation. Dus3-mediated dihydrouridylation of the mRNA encoding alpha-tubulin nda2 is required for meiotic chromosome segregation. The protein is tRNA-dihydrouridine(47) synthase [NAD(P)(+)] of Schizosaccharomyces pombe (strain 972 / ATCC 24843) (Fission yeast).